Consider the following 456-residue polypeptide: Gustatory receptor for sugar taste 64a (456 aa).

The segment at 1–30 (MKGPNLNFRKTPSKDNGVKQVESLARPETP) is disordered. Over 1 to 91 (MKGPNLNFRK…RESNPRRVRF (91 aa)) the chain is Cytoplasmic. The chain crosses the membrane as a helical span at residues 92 to 114 (AYKSIPMFVTLIFMIATSILFLS). At 115-128 (MFTHLLKIGITAKN) the chain is on the extracellular side. Residues 129–150 (FVGLVFFGCVLSAYVVFIRLAK) form a helical membrane-spanning segment. Residue Gly131 coordinates sucrose. The Cytoplasmic portion of the chain corresponds to 151-182 (KWPAVVRIWTRTEIPFTKPPYEIPKRNLSRRV). Residues 183–205 (QLAALAIIGLSLGEHALYQVSAI) traverse the membrane as a helical segment. Glu196, His197, and Tyr234 together coordinate sucrose. Positions 196, 197, 234, 253, and 257 each coordinate D-maltose. Residues 206–245 (LSYTRRIQMCANITTVPSFNNYMQTNYDYVFQLLPYSPII) lie on the Extracellular side of the membrane. A helical membrane pass occupies residues 246-271 (AVLILLINGACTFVWNYMDLFIMMIS). Residue Thr257 participates in sucrose binding. Topologically, residues 272-318 (KGLSYRFEQITTRIRKLEHEEVCESVFIQIREHYVKMCELLEFVDSA) are cytoplasmic. The helical transmembrane segment at 319-342 (MSSLILLSCVNNLYFVCYQLLNVF) threads the bilayer. Over 343 to 350 (NKLRWPIN) the chain is Extracellular. The chain crosses the membrane as a helical span at residues 351 to 373 (YIYFWYSLLYLIGRTAFVFLTAA). Tyr353 serves as a coordination point for sucrose. Tyr353 provides a ligand contact to D-maltose. Residues 374–421 (DINEESKRGLGVLRRVSSRSWCVEVERLIFQMTTQTVALSGKKFYFLT) lie on the Cytoplasmic side of the membrane. Residues 422 to 441 (RRLLFGMAGTIVTYELVLLQ) traverse the membrane as a helical segment. The Extracellular portion of the chain corresponds to 442–456 (FDEPNRRKGLQPLCA).

The protein belongs to the insect chemoreceptor superfamily. Gustatory receptor (GR) family. Gr5a subfamily. Homotetramer. Expressed in Gr5a-expressing sugar-sensing cells.

Its subcellular location is the cell membrane. Its function is as follows. One of the few identified sugar gustatory receptors identified so far and which promotes the starvation-induced increase of feeding motivation. Required in combination with Gr64f to detect sucrose, maltose, and glucose. In Drosophila melanogaster (Fruit fly), this protein is Gustatory receptor for sugar taste 64a (Gr64a).